Consider the following 810-residue polypeptide: Janus kinase and microtubule-interacting protein 2 (810 aa).

Coiled-coil stretches lie at residues 13–102 (EALI…EMSR), 148–178 (ERLK…QADK), and 207–244 (RRLM…KEAL). The span at 261 to 274 (PKREIPGRAGDGSE) shows a compositional bias: basic and acidic residues. Disordered stretches follow at residues 261–280 (PKRE…SSPD) and 437–465 (YDED…DDDL). Residues 280–419 (DLRRNQKRIA…REKLIRRRKH (140 aa)) are a coiled coil. Coiled-coil stretches lie at residues 468–597 (SLAA…RERR) and 664–808 (EKWI…SNRK).

This sequence belongs to the JAKMIP family. Highly expressed in brain, moderately expressed in thymus, spleen and lung, and weakly expressed in kidney, liver and peripheral blood lymphocytes. Also expressed in adrenal and pituitary glands, as well as testis.

The protein localises to the golgi apparatus. The chain is Janus kinase and microtubule-interacting protein 2 (JAKMIP2) from Homo sapiens (Human).